Consider the following 365-residue polypeptide: Flagellar P-ring protein 2 (365 aa).

The N-terminal stretch at 1 to 19 is a signal peptide; the sequence is MKKWIVMASLLLAALPAMS.

It belongs to the FlgI family. As to quaternary structure, the basal body constitutes a major portion of the flagellar organelle and consists of four rings (L,P,S, and M) mounted on a central rod.

Its subcellular location is the periplasm. The protein resides in the bacterial flagellum basal body. Functionally, assembles around the rod to form the L-ring and probably protects the motor/basal body from shearing forces during rotation. This is Flagellar P-ring protein 2 from Chromobacterium violaceum (strain ATCC 12472 / DSM 30191 / JCM 1249 / CCUG 213 / NBRC 12614 / NCIMB 9131 / NCTC 9757 / MK).